The following is a 439-amino-acid chain: uncharacterized protein (439 aa).

A signal peptide spans 1–19 (MKKLLLTASIICLASAGLA).

This is an uncharacterized protein from Rickettsia felis (strain ATCC VR-1525 / URRWXCal2) (Rickettsia azadi).